Here is a 444-residue protein sequence, read N- to C-terminus: RAC family serine/threonine-protein kinase homolog (444 aa).

One can recognise a PH domain in the interval 5 to 100; sequence PIKHEGFLTK…WIEILINERE (96 aa). The Protein kinase domain occupies 120–374; that stretch reads FELLNLVGKG…PNLIKRHPFF (255 aa). ATP-binding positions include 126–134 and K149; that span reads VGKGSFGKV. D243 functions as the Proton acceptor in the catalytic mechanism. Residue T278 is modified to Phosphothreonine. The 70-residue stretch at 375-444 folds into the AGC-kinase C-terminal domain; it reads RSIDWEQLFQ…TYVAESEHLR (70 aa).

Belongs to the protein kinase superfamily. AGC Ser/Thr protein kinase family. RAC subfamily.

It catalyses the reaction L-seryl-[protein] + ATP = O-phospho-L-seryl-[protein] + ADP + H(+). It carries out the reaction L-threonyl-[protein] + ATP = O-phospho-L-threonyl-[protein] + ADP + H(+). In terms of biological role, predominantly involved during the aggregation to control cell polarity and chemotaxis. Phosphorylates talB, gefN, gefS, PI4P 5-kinase and gacQ. The chain is RAC family serine/threonine-protein kinase homolog (pkbA) from Dictyostelium discoideum (Social amoeba).